Consider the following 79-residue polypeptide: Spidroin-1 (79 aa).

Belongs to the silk fibroin family. As to quaternary structure, major subunit, with spidroin 2, of the dragline silk.

It is found in the secreted. It localises to the extracellular space. Spiders' major ampullate silk possesses unique characteristics of strength and elasticity. Fibroin consists of pseudocrystalline regions of antiparallel beta-sheet interspersed with elastic amorphous segments. This is Spidroin-1 from Araneus bicentenarius (Giant lichen orbweaver).